We begin with the raw amino-acid sequence, 1146 residues long: Elicitor of plant defense protein 1 (1146 aa).

2 disordered regions span residues 25-75 (DPLP…RLSN) and 156-226 (ARPP…PRQG). Positions 164 to 177 (RAERIKAEDSDQSG) are enriched in basic and acidic residues. One can recognise a uDENN domain in the interval 246–500 (PLNTDPNMHP…NLCTEAFSPL (255 aa)). The cDENN domain maps to 522 to 656 (VNEIPGSRTI…HRRKLHALLQ (135 aa)). In terms of domain architecture, dDENN spans 658–1016 (AAPAKLRYGV…ERETKPGTTA (359 aa)). The segment at 730–806 (LHSKVDPNKP…RRSSSFGVDK (77 aa)) is disordered. The segment covering 732–743 (SKVDPNKPDRPG) has biased composition (basic and acidic residues). The segment covering 744–760 (TSKSTRTSPPSSVSPVS) has biased composition (low complexity). Polar residues predominate over residues 769–783 (TPVSRSDSGFALTST). Over residues 784-797 (LREKRSRNFDEKTR) the composition is skewed to basic and acidic residues. The segment at 883 to 931 (GHCFNWEEGALSSSCSVCDDRAEGDGIYKCSGCSAFAHGRCLGCVSLAC) adopts a Phorbol-ester/DAG-type zinc-finger fold. A disordered region spans residues 1121-1146 (PRPEQRGTRGLVRKQVPSMLGTSPTN).

It belongs to the EPD1 elicitor family. In terms of assembly, interacts with host cotton EIR5A (AC A0A5J5T2N2) and EIR5D (AC A0A5J5NT52) and host N.benthamiana EIR (AC P0DXJ0).

The protein localises to the secreted. It localises to the host cell. Acts as an elicitor that triggers defense responses in both Nicotiana benthamiana and cotton plants. Triggers the accumulation of reactive oxygen species (ROS) and the activation of cell death in cotton plants. Induces significantly enhanced resistance of Nicotiana benthamiana to both the broad-host-range filamentous pathogen Botrytis cinerea and the semibiotrophic pathogen Phytophthora capsici. Stimulates the expression of EIR5A (AC A0A5J5T2N2) and EIR5D (AC A0A5J5NT52) in cotton plants and recognition of EPD1 potentiates EIRs to enhance cotton PAMP-triggered immunity (PTI). In Verticillium dahliae (strain VdLs.17 / ATCC MYA-4575 / FGSC 10137) (Verticillium wilt), this protein is Elicitor of plant defense protein 1.